Here is a 301-residue protein sequence, read N- to C-terminus: Probable alpha-L-glutamate ligase (301 aa).

One can recognise an ATP-grasp domain in the interval 104–287 (LQLLSRRGIG…VAGMIIEHLE (184 aa)). ATP is bound by residues Lys141, 178–179 (EY), Asp187, and 211–213 (RSN). Asp248, Glu260, and Asn262 together coordinate Mg(2+). Mn(2+) contacts are provided by Asp248, Glu260, and Asn262.

It belongs to the RimK family. The cofactor is Mg(2+). Mn(2+) serves as cofactor.

In Pseudomonas putida (strain ATCC 700007 / DSM 6899 / JCM 31910 / BCRC 17059 / LMG 24140 / F1), this protein is Probable alpha-L-glutamate ligase.